A 383-amino-acid polypeptide reads, in one-letter code: Putative glutamate--cysteine ligase 2 (383 aa).

The protein belongs to the glutamate--cysteine ligase type 2 family. YbdK subfamily.

It carries out the reaction L-cysteine + L-glutamate + ATP = gamma-L-glutamyl-L-cysteine + ADP + phosphate + H(+). In terms of biological role, ATP-dependent carboxylate-amine ligase which exhibits weak glutamate--cysteine ligase activity. This Clavibacter michiganensis subsp. michiganensis (strain NCPPB 382) protein is Putative glutamate--cysteine ligase 2.